The chain runs to 118 residues: DNA-binding protein MmarC6_0793 (118 aa).

Residues 1 to 12 (MNPEEIRQRRLQ) show a composition bias toward basic and acidic residues. The interval 1–33 (MNPEEIRQRRLQEMQAKAQEQGAQDPEAQRQMQ) is disordered. The span at 24–33 (QDPEAQRQMQ) shows a compositional bias: low complexity.

This sequence belongs to the PDCD5 family.

The sequence is that of DNA-binding protein MmarC6_0793 from Methanococcus maripaludis (strain C6 / ATCC BAA-1332).